The chain runs to 56 residues: Conotoxin Cal6.41c (56 aa).

The first 23 residues, 1 to 23 (MSGSGAMLLGLLILVAMATSLDT), serve as a signal peptide directing secretion. 3 cysteine pairs are disulfide-bonded: Cys-27/Cys-41, Cys-33/Cys-50, and Cys-40/Cys-54.

Expressed by the venom duct.

It localises to the secreted. Probable neurotoxin. This is Conotoxin Cal6.41c from Californiconus californicus (California cone).